Here is a 428-residue protein sequence, read N- to C-terminus: E3 ubiquitin-protein ligase RNF128 (428 aa).

A signal peptide spans 1–38; the sequence is MGPPLGAGVSCRGGCGSSRLLAWCFLLALSPQAPGSRG. 3 N-linked (GlcNAc...) asparagine glycosylation sites follow: asparagine 48, asparagine 59, and asparagine 101. One can recognise a PA domain in the interval 75 to 183; it reads SPLEPVAGVL…LKGTKILQSI (109 aa). A helical membrane pass occupies residues 208–228; sequence IFFVSVSFFIITAATVGYFIF. Residues 277-318 form an RING-type; atypical zinc finger; that stretch reads CAVCIELYKPNDLVRILTCNHIFHKTCVDPWLLEHRTCPMCK. A disordered region spans residues 346 to 428; that stretch reads ISNSASSHEE…QETAVREIKS (83 aa). The span at 416–428 shows a compositional bias: basic and acidic residues; it reads TPHQETAVREIKS.

Post-translationally, auto-ubiquitinated. Controls the development of T-cell clonal anergy by ubiquitination.

It localises to the cytoplasm. Its subcellular location is the endomembrane system. The protein resides in the cytoskeleton. The protein localises to the perinuclear region. It catalyses the reaction S-ubiquitinyl-[E2 ubiquitin-conjugating enzyme]-L-cysteine + [acceptor protein]-L-lysine = [E2 ubiquitin-conjugating enzyme]-L-cysteine + N(6)-ubiquitinyl-[acceptor protein]-L-lysine.. The protein operates within protein modification; protein ubiquitination. E3 ubiquitin-protein ligase that catalyzes 'Lys-27', 'Lys-48'- or 'Lys-63'-linked polyubiquitin chains formation and plays a role in different biological processes such as modulation of immune response, cytoskeletal dynamics or protein homeostasis. Inhibits IL2 and IL4 transcription, thereby playing an important role in the induction of the anergic phenotype, a long-term stable state of T-lymphocyte unresponsiveness to antigenic stimulation associated with the blockade of interleukin production. Ubiquitinates ARPC5 with 'Lys-48' linkages and COR1A with 'Lys-63' linkages leading to their degradation, down-regulation of these cytoskeletal components results in impaired lamellipodium formation and reduced accumulation of F-actin at the immunological synapse. Functions in the patterning of the dorsal ectoderm; sensitizes ectoderm to respond to neural-inducing signals. Plays a positive role in innate immune response by promoting 'Lys-63'-linked ubiquitination of TBK1 after RNA- or DNA-virus infection. Regulates alveolar macrophage activation and neutrophil infiltration by interacting with TLR4, targeting it for degradation, and inhibiting NF-kappa-B activation, hence decreasing pro-inflammatory cytokines. Negatively regulates the IL-3/STAT5 signaling pathway by facilitating 'Lys-27'-linked polyubiquitination of IL3RA leading to its degradation via lysosomal pathway. Directly regulates the N-glycosylation process in the endoplasmic reticulum by targeting the glycosyl-transferase RPN1 for ubiquitination and degradation. Other substrates targeted for degradation by RNF128 include transmembrane proteins CD40L, CD83 or the tetraspanin CD151. This chain is E3 ubiquitin-protein ligase RNF128 (RNF128), found in Pongo abelii (Sumatran orangutan).